The primary structure comprises 435 residues: Methylenetetrahydrofolate--tRNA-(uracil-5-)-methyltransferase TrmFO (435 aa).

Residue 10-15 (GAGLAG) coordinates FAD.

This sequence belongs to the MnmG family. TrmFO subfamily. In terms of assembly, homodimer. FAD serves as cofactor.

The protein resides in the cytoplasm. The enzyme catalyses uridine(54) in tRNA + (6R)-5,10-methylene-5,6,7,8-tetrahydrofolate + NADH + H(+) = 5-methyluridine(54) in tRNA + (6S)-5,6,7,8-tetrahydrofolate + NAD(+). It catalyses the reaction uridine(54) in tRNA + (6R)-5,10-methylene-5,6,7,8-tetrahydrofolate + NADPH + H(+) = 5-methyluridine(54) in tRNA + (6S)-5,6,7,8-tetrahydrofolate + NADP(+). Its function is as follows. Catalyzes the folate-dependent formation of 5-methyl-uridine at position 54 (M-5-U54) in all tRNAs. The sequence is that of Methylenetetrahydrofolate--tRNA-(uracil-5-)-methyltransferase TrmFO from Bacillus subtilis (strain 168).